Reading from the N-terminus, the 358-residue chain is uncharacterized protein (358 aa).

The EF-hand domain maps to 229-264 (KQLHEFKLAFDYFDQEKNGWLDYEHFELCLKSQGYN). The Ca(2+) site is built by Asp-242, Asn-246, Trp-248, and His-253.

This is an uncharacterized protein from Caenorhabditis elegans.